A 141-amino-acid polypeptide reads, in one-letter code: Hemoglobin subunit alpha (141 aa).

The 141-residue stretch at 1 to 141 folds into the Globin domain; the sequence is VLSPADKKNV…VSTVLTSKYR (141 aa). The residue at position 3 (Ser3) is a Phosphoserine. Residues Lys7 and Lys11 each carry the N6-succinyllysine modification. Lys16 is subject to N6-acetyllysine; alternate. At Lys16 the chain carries N6-succinyllysine; alternate. At Tyr24 the chain carries Phosphotyrosine. Position 35 is a phosphoserine (Ser35). Lys40 is modified (N6-succinyllysine). At Ser49 the chain carries Phosphoserine. His58 provides a ligand contact to O2. His87 contacts heme b. Ser102 bears the Phosphoserine mark. Thr108 carries the phosphothreonine modification. Ser124 and Ser131 each carry phosphoserine. Phosphothreonine is present on residues Thr134 and Thr137. Ser138 bears the Phosphoserine mark.

Belongs to the globin family. As to quaternary structure, heterotetramer of two alpha chains and two beta chains. As to expression, red blood cells.

Involved in oxygen transport from the lung to the various peripheral tissues. In terms of biological role, hemopressin acts as an antagonist peptide of the cannabinoid receptor CNR1. Hemopressin-binding efficiently blocks cannabinoid receptor CNR1 and subsequent signaling. In Spermophilus citellus (European ground squirrel), this protein is Hemoglobin subunit alpha (HBA).